Here is a 131-residue protein sequence, read N- to C-terminus: MRKTSLLNSNISSVISKMGHTDMLAIGDCGLPIPKETERIDLALIKGVPGFIETLKAILEELQVEEVLIAKETEKVSPELFTEIKEIIKDTKITFISHEELKKELKDCKAVVRTGEQTPYANIILKSGVVF.

His-20 (proton donor) is an active-site residue. Residues Asp-28, His-98, and 120 to 122 each bind substrate; that span reads YAN.

The protein belongs to the RbsD / FucU family. RbsD subfamily. As to quaternary structure, homodecamer.

It is found in the cytoplasm. The catalysed reaction is beta-D-ribopyranose = beta-D-ribofuranose. It participates in carbohydrate metabolism; D-ribose degradation; D-ribose 5-phosphate from beta-D-ribopyranose: step 1/2. Functionally, catalyzes the interconversion of beta-pyran and beta-furan forms of D-ribose. The chain is D-ribose pyranase from Clostridium perfringens (strain ATCC 13124 / DSM 756 / JCM 1290 / NCIMB 6125 / NCTC 8237 / Type A).